The chain runs to 400 residues: Tryptophan synthase beta chain (400 aa).

The residue at position 92 (K92) is an N6-(pyridoxal phosphate)lysine.

The protein belongs to the TrpB family. In terms of assembly, tetramer of two alpha and two beta chains. The cofactor is pyridoxal 5'-phosphate.

The enzyme catalyses (1S,2R)-1-C-(indol-3-yl)glycerol 3-phosphate + L-serine = D-glyceraldehyde 3-phosphate + L-tryptophan + H2O. It participates in amino-acid biosynthesis; L-tryptophan biosynthesis; L-tryptophan from chorismate: step 5/5. In terms of biological role, the beta subunit is responsible for the synthesis of L-tryptophan from indole and L-serine. This chain is Tryptophan synthase beta chain, found in Neisseria gonorrhoeae (strain NCCP11945).